A 422-amino-acid polypeptide reads, in one-letter code: Metallocarboxypeptidase A (422 aa).

The first 17 residues, 1 to 17 (MRSVLSLALLAANVVTA), serve as a signal peptide directing secretion. Residues 18-112 (AVVSPFDYSG…FEAYSAGYAP (95 aa)) constitute a propeptide, activation peptide. The 301-residue stretch at 119–419 (SYHSYQDHIS…AGTVAMLKAV (301 aa)) folds into the Peptidase M14 domain. Histidine 179 and glutamate 182 together coordinate Zn(2+). Substrate is bound by residues 179 to 182 (HARE), arginine 237, and 254 to 255 (NR). Cysteine 248 and cysteine 271 are joined by a disulfide. Histidine 309 contacts Zn(2+). A substrate-binding site is contributed by 310–311 (SY). Catalysis depends on glutamate 385, which acts as the Proton donor/acceptor.

Belongs to the peptidase M14 family. Requires Zn(2+) as cofactor.

The protein localises to the secreted. Functionally, extracellular metalloprotease that contributes to pathogenicity. The sequence is that of Metallocarboxypeptidase A (MCPA) from Trichophyton tonsurans (Scalp ringworm fungus).